The following is a 1072-amino-acid chain: Guanylyl cyclase C (1072 aa).

Positions 1-22 (MTSLLGLAVRLLLFQPTLMFWA) are cleaved as a signal peptide. At 23–429 (SQVRQKCHNG…PNDVPGLGPQ (407 aa)) the chain is on the extracellular side. N-linked (GlcNAc...) asparagine glycosylation is found at asparagine 31, asparagine 74, asparagine 78, asparagine 187, asparagine 194, asparagine 306, and asparagine 401. Residues 430-453 (ILMIAVFTLTGIVVVLLLIALLVL) traverse the membrane as a helical segment. At 454-1072 (RKYRRDHELR…NNSDHDSTYF (619 aa)) the chain is on the cytoplasmic side. One can recognise a Protein kinase domain in the interval 488–748 (LKIDDDRRRD…KIESTLAKIF (261 aa)). In terms of domain architecture, Guanylate cyclase spans 823 to 953 (TIYFSDIVGF…DTVNTASRME (131 aa)).

The protein belongs to the adenylyl cyclase class-4/guanylyl cyclase family. As to quaternary structure, homotrimer. Interacts via its C-terminal region with PDZK2. Interacts with the lectin chaperone VIP36. Post-translationally, glycosylation at Asn-74 and/or Asn-78 is required for interaction with VIP36 while glycosylation at Asn-401 modulates ligand-mediated GC-C activation.

The protein resides in the cell membrane. The protein localises to the endoplasmic reticulum membrane. It carries out the reaction GTP = 3',5'-cyclic GMP + diphosphate. In terms of biological role, guanylyl cyclase that catalyzes synthesis of cyclic GMP (cGMP) from GTP. Receptor for the E.coli heat-stable enterotoxin; E.coli enterotoxin markedly stimulates the accumulation of cGMP in mammalian cells expressing GUCY2C. The protein is Guanylyl cyclase C (Gucy2c) of Rattus norvegicus (Rat).